Consider the following 180-residue polypeptide: NADH-quinone oxidoreductase subunit I 1 (180 aa).

2 4Fe-4S ferredoxin-type domains span residues 50–80 (LSRD…LQKT) and 90–119 (EFFR…LTPD). [4Fe-4S] cluster is bound by residues Cys60, Cys63, Cys66, Cys70, Cys99, Cys102, Cys105, and Cys109.

The protein belongs to the complex I 23 kDa subunit family. NDH-1 is composed of 14 different subunits. Subunits NuoA, H, J, K, L, M, N constitute the membrane sector of the complex. [4Fe-4S] cluster serves as cofactor.

It is found in the cell inner membrane. The catalysed reaction is a quinone + NADH + 5 H(+)(in) = a quinol + NAD(+) + 4 H(+)(out). NDH-1 shuttles electrons from NADH, via FMN and iron-sulfur (Fe-S) centers, to quinones in the respiratory chain. The immediate electron acceptor for the enzyme in this species is believed to be ubiquinone. Couples the redox reaction to proton translocation (for every two electrons transferred, four hydrogen ions are translocated across the cytoplasmic membrane), and thus conserves the redox energy in a proton gradient. In Nitrosococcus oceani (strain ATCC 19707 / BCRC 17464 / JCM 30415 / NCIMB 11848 / C-107), this protein is NADH-quinone oxidoreductase subunit I 1.